The chain runs to 204 residues: Nascent polypeptide-associated complex subunit alpha-like protein 3 (204 aa).

Residues 1 to 23 are compositionally biased toward basic and acidic residues; it reads MTAEQKVELAAKLEEQKIDLDKP. 2 disordered regions span residues 1-68 and 141-165; these read MTAE…AMLK and GETSSAATAAAVQDDDDEEVDEEGV. Residues 24–43 show a composition bias toward acidic residues; the sequence is EVEDDDDNDEDDSEDDDEAE. S36 is subject to Phosphoserine. Residues 44-59 are compositionally biased toward basic and acidic residues; sequence GHDGEAGGRSKQSRSE. In terms of domain architecture, NAC-A/B spans 56-121; that stretch reads SRSEKKSRKA…AKIEDLSSQL (66 aa). Positions 141–152 are enriched in low complexity; it reads GETSSAATAAAV. Acidic residues predominate over residues 153–164; it reads QDDDDEEVDEEG. The UBA domain maps to 159 to 204; sequence EVDEEGVEPKDIELVMTQAGVSKPRAVKALKLANGDIVSAIMELTT.

It belongs to the NAC-alpha family.

Its function is as follows. May promote appropriate targeting of ribosome-nascent polypeptide complexes. This is Nascent polypeptide-associated complex subunit alpha-like protein 3 from Arabidopsis thaliana (Mouse-ear cress).